The following is a 235-amino-acid chain: Large ribosomal subunit protein uL1 (235 aa).

The protein belongs to the universal ribosomal protein uL1 family. In terms of assembly, part of the 50S ribosomal subunit.

Functionally, binds directly to 23S rRNA. The L1 stalk is quite mobile in the ribosome, and is involved in E site tRNA release. Protein L1 is also a translational repressor protein, it controls the translation of the L11 operon by binding to its mRNA. In Synechococcus sp. (strain CC9605), this protein is Large ribosomal subunit protein uL1.